A 287-amino-acid chain; its full sequence is Carbon monoxide dehydrogenase medium chain (287 aa).

One can recognise an FAD-binding PCMH-type domain in the interval 1–177 (MIPPRFEYHA…VEIRVPAFAQ (177 aa)). Residues 32-36 (AGGHS) and 111-115 (TIGGD) each bind FAD.

Dimer of heterotrimers. Each heterotrimer consists of a large, a medium and a small subunit. Requires FAD as cofactor.

The enzyme catalyses CO + a quinone + H2O = a quinol + CO2. Catalyzes the oxidation of carbon monoxide to carbon dioxide. This Hydrogenophaga pseudoflava (Pseudomonas carboxydoflava) protein is Carbon monoxide dehydrogenase medium chain (cutM).